We begin with the raw amino-acid sequence, 565 residues long: NAD-dependent malic enzyme (565 aa).

Y104 serves as the catalytic Proton donor. R157 contributes to the NAD(+) binding site. K175 functions as the Proton acceptor in the catalytic mechanism. A divalent metal cation-binding residues include E246, D247, and D270. Residues D270 and N418 each coordinate NAD(+).

Belongs to the malic enzymes family. In terms of assembly, homotetramer. The cofactor is Mg(2+). Mn(2+) is required as a cofactor.

It catalyses the reaction (S)-malate + NAD(+) = pyruvate + CO2 + NADH. The catalysed reaction is oxaloacetate + H(+) = pyruvate + CO2. The polypeptide is NAD-dependent malic enzyme (Salmonella agona (strain SL483)).